Here is a 216-residue protein sequence, read N- to C-terminus: Peroxiredoxin (216 aa).

One can recognise a Thioredoxin domain in the interval 2–158; that stretch reads VVIGEKFPEV…ILRLVKALKV (157 aa). Cys46 acts as the Cysteine sulfenic acid (-SOH) intermediate in catalysis. Arg121 is a binding site for substrate. A disulfide bond links Cys205 and Cys211.

Belongs to the peroxiredoxin family. Prx6 subfamily. As to quaternary structure, homodecamer. Pentamer of dimers that assemble into a ring structure.

Its subcellular location is the cytoplasm. It catalyses the reaction a hydroperoxide + [thioredoxin]-dithiol = an alcohol + [thioredoxin]-disulfide + H2O. Functionally, thiol-specific peroxidase that catalyzes the reduction of hydrogen peroxide and organic hydroperoxides to water and alcohols, respectively. Plays a role in cell protection against oxidative stress by detoxifying peroxides. The protein is Peroxiredoxin of Thermococcus kodakarensis (strain ATCC BAA-918 / JCM 12380 / KOD1) (Pyrococcus kodakaraensis (strain KOD1)).